We begin with the raw amino-acid sequence, 695 residues long: Segment polarity protein dishevelled homolog DVL-1 (695 aa).

The DIX domain occupies 1-85; it reads MAETKIIYHM…RVVSWLVLAE (85 aa). A disordered region spans residues 89–237; sequence SDAGSQGTDS…LRQADRASSF (149 aa). Basic residues predominate over residues 142–151; the sequence is SHRRERARRR. Basic and acidic residues predominate over residues 152–171; the sequence is NREEAARTNGHPRGDRRRDV. The segment covering 176-192 has biased composition (low complexity); the sequence is DSASTALSSELESSSFV. Phosphoserine is present on Ser-194. A compositionally biased stretch (low complexity) spans 200–214; that stretch reads TSRLSSSTEQSTSSR. Basic residues predominate over residues 215–228; it reads LIRKHKRRRRKQRL. Positions 251–323 constitute a PDZ domain; that stretch reads TVTLNMERHH…NDDAVRVLRE (73 aa). The region spanning 425–499 is the DEP domain; sequence PDSGLEIRDR…SEQCYYVFGD (75 aa). A disordered region spans residues 543-667; it reads PGPPPCFPPA…PGGPPVRELA (125 aa). Positions 551–580 are enriched in low complexity; that stretch reads PAYQDPGFSYGSGSTGSQQSEGSKSSGSTR. The span at 625–636 shows a compositional bias: polar residues; the sequence is SRGSSPRSQASA.

The protein belongs to the DSH family. Interacts with CXXC4. Interacts (via PDZ domain) with NXN. Interacts with BRD7 and INVS. Interacts (via PDZ domain) with VANGL1 and VANGL2 (via C-terminus). Interacts with ARRB1; the interaction is enhanced by phosphorylation of DVL1. Interacts with CYLD. Interacts (via PDZ domain) with RYK. Self-associates (via DIX domain) and forms higher homooligomers. Interacts (via PDZ domain) with DACT1 and FZD7, where DACT1 and FZD7 compete for the same binding site. Interacts (via DEP domain) with MUSK; the interaction is direct and mediates the formation a DVL1, MUSK and PAK1 ternary complex involved in AChR clustering. Interacts (via PDZ domain) with TMEM88. Interacts with DCDC2. Interacts with FOXK2. Interacts with PKD1 (via extracellular domain). Interacts (via PDZ domain) with CCDC88C/DAPLE; competes with CCDC88C for binding to frizzled receptor FZD7 and dissociates from CCDC88C following initiation of non-canonical Wnt signaling when CCDC88C displaces DVL1 from ligand-activated FZD7. Post-translationally, ubiquitinated; undergoes both 'Lys-48'-linked ubiquitination, leading to its subsequent degradation by the ubiquitin-proteasome pathway, and 'Lys-63'-linked ubiquitination. The interaction with INVS is required for ubiquitination. Deubiquitinated by CYLD, which acts on 'Lys-63'-linked ubiquitin chains.

It is found in the cell membrane. It localises to the cytoplasm. The protein localises to the cytosol. Its subcellular location is the cytoplasmic vesicle. Participates in Wnt signaling by binding to the cytoplasmic C-terminus of frizzled family members and transducing the Wnt signal to down-stream effectors. Plays a role both in canonical and non-canonical Wnt signaling. Plays a role in the signal transduction pathways mediated by multiple Wnt genes. Required for LEF1 activation upon WNT1 and WNT3A signaling. DVL1 and PAK1 form a ternary complex with MUSK which is important for MUSK-dependent regulation of AChR clustering during the formation of the neuromuscular junction (NMJ). This chain is Segment polarity protein dishevelled homolog DVL-1 (DVL1), found in Homo sapiens (Human).